The following is a 67-amino-acid chain: Large ribosomal subunit protein bL35 (67 aa).

It belongs to the bacterial ribosomal protein bL35 family.

The sequence is that of Large ribosomal subunit protein bL35 from Leptospira borgpetersenii serovar Hardjo-bovis (strain JB197).